The primary structure comprises 312 residues: Very-long-chain 3-oxoacyl-CoA reductase (312 aa).

Helical transmembrane passes span 33 to 53 (VWGIGAGRAALGPGLGAWAVV), 181 to 201 (GVILNISSAAGMYPTPLLTLY), and 274 to 294 (HAFMGWVFSILPTSTVMNLLM). An NADP(+)-binding site is contributed by 48 to 77 (GAWAVVTGATDGIGKAYAKELAKRGMKVAL). Serine 188 serves as a coordination point for substrate. Tyrosine 201 (proton acceptor) is an active-site residue.

The protein belongs to the short-chain dehydrogenases/reductases (SDR) family. 17-beta-HSD 3 subfamily. As to expression, brain.

The protein resides in the endoplasmic reticulum membrane. It carries out the reaction a very-long-chain (3R)-3-hydroxyacyl-CoA + NADP(+) = a very-long-chain 3-oxoacyl-CoA + NADPH + H(+). It catalyses the reaction 17beta-estradiol + NAD(+) = estrone + NADH + H(+). The catalysed reaction is 17beta-estradiol + NADP(+) = estrone + NADPH + H(+). The enzyme catalyses 3-oxooctadecanoyl-CoA + NADPH + H(+) = (3R)-hydroxyoctadecanoyl-CoA + NADP(+). It carries out the reaction (7Z,10Z,13Z,16Z)-3-oxodocosatetraenoyl-CoA + NADPH + H(+) = (3R)-hydroxy-(7Z,10Z,13Z,16Z)-docosatetraenoyl-CoA + NADP(+). It catalyses the reaction 3-oxo-(7Z,10Z,13Z,16Z,19Z)-docosapentaenoyl-CoA + NADPH + H(+) = (3R)-hydroxy-(7Z,10Z,13Z,16Z,19Z)-docosapentaenoyl-CoA + NADP(+). The catalysed reaction is (8Z,11Z,14Z)-3-oxoeicosatrienoyl-CoA + NADPH + H(+) = (3R)-hydroxy-(8Z,11Z,14Z)-eicosatrienoyl-CoA + NADP(+). Its pathway is lipid metabolism; fatty acid biosynthesis. It functions in the pathway steroid biosynthesis; estrogen biosynthesis. Catalyzes the second of the four reactions of the long-chain fatty acids elongation cycle. This endoplasmic reticulum-bound enzymatic process, allows the addition of two carbons to the chain of long- and very long-chain fatty acids/VLCFAs per cycle. This enzyme has a 3-ketoacyl-CoA reductase activity, reducing 3-ketoacyl-CoA to 3-hydroxyacyl-CoA, within each cycle of fatty acid elongation. Thereby, it may participate in the production of VLCFAs of different chain lengths that are involved in multiple biological processes as precursors of membrane lipids and lipid mediators. May also catalyze the transformation of estrone (E1) into estradiol (E2) and play a role in estrogen formation. In Anas platyrhynchos (Mallard), this protein is Very-long-chain 3-oxoacyl-CoA reductase (HSD17B12).